Reading from the N-terminus, the 124-residue chain is Putative B3 domain-containing protein At1g51970 (124 aa).

Residues Val-18 to Asn-124 constitute a DNA-binding region (TF-B3).

The protein localises to the nucleus. In Arabidopsis thaliana (Mouse-ear cress), this protein is Putative B3 domain-containing protein At1g51970.